The primary structure comprises 63 residues: Ferredoxin (63 aa).

The 28-residue stretch at 2–29 folds into the 4Fe-4S ferredoxin-type domain; the sequence is KVTVDQDLCIACGTCIDLCPSVFDWDDE. [4Fe-4S] cluster contacts are provided by cysteine 10, cysteine 13, cysteine 16, and cysteine 55.

The cofactor is [4Fe-4S] cluster.

Its function is as follows. Ferredoxins are iron-sulfur proteins that transfer electrons in a wide variety of metabolic reactions. The chain is Ferredoxin from Moorella thermoacetica (Clostridium thermoaceticum).